Here is a 582-residue protein sequence, read N- to C-terminus: Zinc finger protein 319 (582 aa).

Positions 1 to 14 are enriched in low complexity; that stretch reads MSESWQQPPQTQPQ. Residues 1–39 are disordered; sequence MSESWQQPPQTQPQQPQPPQPQHHAEPPPALAEHTLPPG. A C2H2-type 1 zinc finger spans residues 76–100; sequence PKCGVCGHDLAHLSSPHEHQCLAGH. The C2H2-type 2; degenerate zinc-finger motif lies at 104-126; the sequence is FQCTQCLKIFHQATDLLEHQCVQ. A Glycyl lysine isopeptide (Lys-Gly) (interchain with G-Cter in SUMO2) cross-link involves residue K130. The C2H2-type 3 zinc finger occupies 132–154; that stretch reads FVCGVCKMGFSLLTSLAQHHSSH. The span at 174–196 shows a compositional bias: low complexity; it reads EPATTAAPSLPAAPAPSTVTPAE. Residues 174–198 are disordered; that stretch reads EPATTAAPSLPAAPAPSTVTPAEQA. 3 consecutive C2H2-type zinc fingers follow at residues 202 to 224, 230 to 252, and 258 to 280; these read YSCP…ERIH, YKCT…KRTH, and YKCA…MYAH. At S281 the chain carries Phosphoserine. The segment at 287–309 adopts a C2H2-type 7; degenerate zinc-finger fold; that stretch reads FRCNVCELHFKESSELLQHPCTP. C2H2-type zinc fingers lie at residues 315-337, 343-365, and 371-393; these read FRCG…ERTH, FKCD…RRTH, and FKCG…QHVH. The segment at 399 to 421 adopts a C2H2-type 11; degenerate zinc-finger fold; sequence FKCPVCQKGFDQSAELLRHKCLP. The C2H2-type 12 zinc-finger motif lies at 428-450; sequence FKCPVCNKAYKRASALQKHQLAH. The C2H2-type 13; degenerate zinc-finger motif lies at 458-480; sequence LRCTLCERRFFSSSEFVQHRCDP. 3 consecutive C2H2-type zinc fingers follow at residues 486 to 508, 514 to 536, and 542 to 564; these read LKCP…RRVH, YKCP…QGVH, and FKCV…SAQH.

This sequence belongs to the krueppel C2H2-type zinc-finger protein family.

It localises to the nucleus. Functionally, may be involved in transcriptional regulation. The polypeptide is Zinc finger protein 319 (ZNF319) (Homo sapiens (Human)).